The following is a 248-amino-acid chain: PF03932 family protein CutC (248 aa).

Belongs to the CutC family. Homodimer.

It localises to the cytoplasm. The chain is PF03932 family protein CutC from Shigella boydii serotype 4 (strain Sb227).